Consider the following 213-residue polypeptide: Large ribosomal subunit protein uL4 (213 aa).

A disordered region spans residues 41–75 (GTASTKTRAEVSRSGKKMYSQKGTGNARHGDRSVP).

The protein belongs to the universal ribosomal protein uL4 family. As to quaternary structure, part of the 50S ribosomal subunit.

Its function is as follows. One of the primary rRNA binding proteins, this protein initially binds near the 5'-end of the 23S rRNA. It is important during the early stages of 50S assembly. It makes multiple contacts with different domains of the 23S rRNA in the assembled 50S subunit and ribosome. In terms of biological role, forms part of the polypeptide exit tunnel. This chain is Large ribosomal subunit protein uL4, found in Deinococcus geothermalis (strain DSM 11300 / CIP 105573 / AG-3a).